The following is a 1771-amino-acid chain: Kinase D-interacting substrate of 220 kDa (1771 aa).

Topologically, residues 1–499 are cytoplasmic; the sequence is MSVLISQSVI…QIEPLFQFSW (499 aa). 12 ANK repeats span residues 4–33, 37–66, 70–99, 103–132, 136–165, 169–198, 202–231, 235–264, 268–297, 301–330, 334–363, and 367–396; these read LISQ…DVDE, CGQT…NCNL, DNWT…NLEH, GGWT…NPSV, YSVY…KVNC, YGTT…DVDQ, NSMT…NVNL, DGNT…YVNI, SGDT…DIDI, DNKT…DTEI, DGET…KVSA, and KGDT…DGRL. Residues 440–953 form the KAP NTPase domain; it reads YDLYSSALAD…NIVSVTGRLL (514 aa). A helical transmembrane segment spans residues 500-520; sequence LIVFLTLLLCGGLGLLFAFTV. Topologically, residues 521–524 are extracellular; it reads HPNL. The chain crosses the membrane as a helical span at residues 525 to 545; sequence GIAVSLSFLALLYIFFIVIYF. Over 546–659 the chain is Cytoplasmic; it reads GGRREGESWN…KWKKTCCLPS (114 aa). Residues 660–680 traverse the membrane as a helical segment; the sequence is FVIFLFIIGCIISGITLLAIF. Topologically, residues 681–685 are extracellular; sequence RVDPK. A helical membrane pass occupies residues 686–706; it reads HLTVNAVLISIASVVGLAFVL. The Cytoplasmic segment spans residues 707-1771; that stretch reads NCRTWWQVLD…GFGEERESIL (1065 aa). Phosphoserine occurs at positions 882 and 885. Thr-914 carries the phosphothreonine modification. Ser-918 carries the post-translational modification Phosphoserine. The tract at residues 1089–1092 is mediates interaction with CRKL; that stretch reads PRAP. At Ser-1163 the chain carries Phosphoserine. Disordered regions lie at residues 1182 to 1202, 1285 to 1310, 1344 to 1368, and 1397 to 1564; these read DAAE…PAPG, PEDP…RASH, RHSN…SQDS, and LEGG…EPIR. Phosphoserine is present on residues Ser-1296, Ser-1352, Ser-1359, Ser-1361, Ser-1362, and Ser-1365. Polar residues predominate over residues 1346 to 1358; that stretch reads SNLSWQSQTRRTP. The segment covering 1359–1368 has biased composition (low complexity); the sequence is SLSSLNSQDS. Polar residues predominate over residues 1403–1430; sequence STTISGRSSPHSTYYMGQSSSGGSIHSN. The span at 1431-1457 shows a compositional bias: basic and acidic residues; the sequence is LEQEKGKDSEPKPDDGRKSFLMKRGDV. Residues 1460 to 1470 show a composition bias toward polar residues; that stretch reads YSSSGVSTNDA. 4 positions are modified to phosphoserine: Ser-1521, Ser-1526, Ser-1555, and Ser-1574. Residues 1522 to 1532 show a composition bias toward acidic residues; it reads DEDESGTEESD. The segment covering 1537-1561 has biased composition (basic and acidic residues); the sequence is LKDDKDRKAEGKVERVPKSPEHSAE. The disordered stretch occupies residues 1578-1633; sequence LDKKDSSDSGVRSSESSPNHSLHNEVADDSQLEKANLIELEDDSHSGKRGIPHSLS. Residues 1585–1594 show a composition bias toward low complexity; the sequence is DSGVRSSESS. 2 positions are modified to phosphoserine: Ser-1623 and Ser-1633. Residue Thr-1679 is modified to Phosphothreonine. Residue Ser-1681 is modified to Phosphoserine. Residue Thr-1684 is modified to Phosphothreonine. A compositionally biased stretch (polar residues) spans 1713-1731; sequence LRPSSSPNPTTIQNENLKS. The interval 1713–1771 is disordered; that stretch reads LRPSSSPNPTTIQNENLKSMTHKRSQRSSYTRLSKDPPELHAAASSESTGFGEERESIL. Residues 1766-1771 carry the PDZ-binding motif; it reads ERESIL.

As to quaternary structure, found in a complex, at least composed of KIDINS220, MAGI2, NTRK1 and RAPGEF2; the complex is mainly formed at late endosomes in a nerve growth factor (NGF)-dependent manner. Interacts with RAPGEF2; the interaction is strengthened after NGF stimulation. Isoform 2 interacts (via C-terminal domain) with MAGI2 isoform 1 (via PDZ domain). Interacts with NTRK1, NTRK2, NTRK3, ERKL and NGFR. Can form a ternary complex with NGFR and NTRK1 and this complex is affected by the expression levels of KIDINS220/ARMS. An increase in KIDINS220/ARMS expression leads to a decreased association of NGFR and NTRK1. Interacts (via PDZ-binding motif) with SNTA1 and SNTB2 (via PDZ domains). Interacts with EPHA4 and PRKD1. Tyrosine phosphorylated by NTRK1, NTRK2, EPHB2 and EPHA4. Phosphorylation at Ser-918 is induced by phorbol ester treatment. Phosphorylation by NTRK2 is induced by brain-derived neurotrophic factor (BDNF) and neurotrophin-4/5. Phosphorylation by NTRK1 is induced by nerve growth factor (NGF). In terms of tissue distribution, abundant in developing and adult neural tissues as well as neuroendocrine cells and dendritic cells. Overexpressed in melanoma and melanoma cell lines.

The protein localises to the membrane. It is found in the late endosome. In terms of biological role, promotes a prolonged MAP-kinase signaling by neurotrophins through activation of a Rap1-dependent mechanism. Provides a docking site for the CRKL-C3G complex, resulting in Rap1-dependent sustained ERK activation. May play an important role in regulating postsynaptic signal transduction through the syntrophin-mediated localization of receptor tyrosine kinases such as EPHA4. In cooperation with SNTA1 can enhance EPHA4-induced JAK/STAT activation. Plays a role in nerve growth factor (NGF)-induced recruitment of RAPGEF2 to late endosomes and neurite outgrowth. May play a role in neurotrophin- and ephrin-mediated neuronal outgrowth and in axon guidance during neural development and in neuronal regeneration. Modulates stress-induced apoptosis of melanoma cells via regulation of the MEK/ERK signaling pathway. In Homo sapiens (Human), this protein is Kinase D-interacting substrate of 220 kDa (KIDINS220).